The chain runs to 143 residues: Hemoglobin subunit alpha-2 (143 aa).

Residue S2 is modified to N-acetylserine. The Globin domain maps to 2–143 (SLTEKDKAAV…LSLALAEKYR (142 aa)). H60 lines the O2 pocket. H89 provides a ligand contact to heme b.

The protein belongs to the globin family. In terms of assembly, hb2 is a heterotetramer of two alpha-2 chains and two beta-1 chains; Hb3 is a heterotetramer of two alpha-2 chains and two beta-2 chains. As to expression, red blood cells.

Involved in oxygen transport from gills to the various peripheral tissues. The protein is Hemoglobin subunit alpha-2 (hba2) of Anarhichas minor (Arctic spotted wolffish).